The primary structure comprises 334 residues: HTH-type transcriptional repressor PurR (334 aa).

In terms of domain architecture, HTH lacI-type spans 2–56; it reads ATIKDVAKMAGVSTTTVSHVINKTRHVADETKQTVLDAIKALNYSPSAVARSLKV. The H-T-H motif DNA-binding region spans 4–23; sequence IKDVAKMAGVSTTTVSHVIN. The DNA-binding element occupies 48–56; that stretch reads SAVARSLKV. Hypoxanthine is bound by residues Tyr-73, Lys-189, Thr-191, Phe-220, and Asp-274.

In terms of assembly, homodimer.

Its pathway is purine metabolism; purine nucleotide biosynthesis [regulation]. Functionally, is the main repressor of the genes involved in the de novo synthesis of purine nucleotides, regulating purB, purC, purEK, purF, purHD, purL, purMN and guaBA expression. PurR is allosterically activated to bind its cognate DNA by binding the purine corepressors, hypoxanthine or guanine, thereby effecting transcription repression. The polypeptide is HTH-type transcriptional repressor PurR (Mannheimia succiniciproducens (strain KCTC 0769BP / MBEL55E)).